The sequence spans 597 residues: Polyphenol oxidase latent form, chloroplastic (597 aa).

The N-terminal 49 residues, 1 to 49 (MATAPSPTTMGTYSSLISTNSFSTFLPNKSQLSLSGKSKHYVARRSSIS), are a transit peptide targeting the chloroplast. Residues 49–70 (SCKATNNNNSNNQNEQQEESSR) form a disordered region. The N-terminal 52 residues, 50 to 101 (CKATNNNNSNNQNEQQEESSRLLGKLDRRNILIGLGGLYGATTLDRKPFAFA), are a transit peptide targeting the thylakoid. A compositionally biased stretch (low complexity) spans 54-63 (NNNNSNNQNE). 2 disulfide bridges follow: cysteine 112–cysteine 128 and cysteine 127–cysteine 189. Residues histidine 188, histidine 209, histidine 218, histidine 341, histidine 345, and histidine 375 each coordinate Cu cation. The segment at residues 192–209 (CNGAYPQVGFTDNDIQVH) is a cross-link (2'-(S-cysteinyl)-histidine (Cys-His)).

Belongs to the tyrosinase family. Monomer. Requires Cu(2+) as cofactor. As to expression, expressed in immature-green fruit.

It is found in the plastid. The protein resides in the chloroplast thylakoid lumen. It catalyses the reaction 2 catechol + O2 = 2 1,2-benzoquinone + 2 H2O. With respect to regulation, activated in the presence of substrate at low pH. Specific activity fluctuates during fruit ripening, starting at immature-green stage, reaching a peak at the breaker stage, followed by a sharp decrease until the half-ripe stage to remain stable during the following development stages. Triggered by CuSO(4) and by low concentrations of SDS. Repressed by several inhibitors including 4-hexylresorcinol, ascorbic acid, benzoic acid, kojic acid, glutathione (reduced form), L-cysteine and sodium metabisulfite. Inhibited by various salt such as FeSO(4), KCl, NaCl, CaCl(2), MnCl(2), NiCl(2) and AlCl(3). Spontaneously activated during storage at 4 degrees Celsius. Functionally, catalyzes the oxidation of mono- and o-diphenols to o-diquinones. Uses preferentially 4-methylcatechol and chlorogenic acid as substrates, followed by caffeic acid, pyrogallol, and catechol, but barely active toward dopamine and L-dopa. No activity detected with monophenols (e.g. phenol and tyramine). The sequence is that of Polyphenol oxidase latent form, chloroplastic from Prunus armeniaca (Apricot).